Consider the following 613-residue polypeptide: Dihydroxy-acid dehydratase (613 aa).

Residue Asp-81 coordinates Mg(2+). Residue Cys-122 coordinates [2Fe-2S] cluster. Residues Asp-123 and Lys-124 each coordinate Mg(2+). Lys-124 is modified (N6-carboxylysine). Cys-195 contributes to the [2Fe-2S] cluster binding site. Mg(2+) is bound at residue Glu-491. Catalysis depends on Ser-517, which acts as the Proton acceptor.

It belongs to the IlvD/Edd family. Homodimer. [2Fe-2S] cluster serves as cofactor. Mg(2+) is required as a cofactor.

It carries out the reaction (2R)-2,3-dihydroxy-3-methylbutanoate = 3-methyl-2-oxobutanoate + H2O. The catalysed reaction is (2R,3R)-2,3-dihydroxy-3-methylpentanoate = (S)-3-methyl-2-oxopentanoate + H2O. It participates in amino-acid biosynthesis; L-isoleucine biosynthesis; L-isoleucine from 2-oxobutanoate: step 3/4. The protein operates within amino-acid biosynthesis; L-valine biosynthesis; L-valine from pyruvate: step 3/4. Functions in the biosynthesis of branched-chain amino acids. Catalyzes the dehydration of (2R,3R)-2,3-dihydroxy-3-methylpentanoate (2,3-dihydroxy-3-methylvalerate) into 2-oxo-3-methylpentanoate (2-oxo-3-methylvalerate) and of (2R)-2,3-dihydroxy-3-methylbutanoate (2,3-dihydroxyisovalerate) into 2-oxo-3-methylbutanoate (2-oxoisovalerate), the penultimate precursor to L-isoleucine and L-valine, respectively. The chain is Dihydroxy-acid dehydratase from Aeromonas salmonicida (strain A449).